A 248-amino-acid polypeptide reads, in one-letter code: ATP synthase subunit a, chloroplastic (248 aa).

4 helical membrane-spanning segments follow: residues 34 to 54 (LHGQVFIVSWLVMLALIIFAL), 95 to 115 (VPYISTVFLFIFGANWAGALI), 134 to 154 (INVTVALALLTSISYFYAGIS), and 203 to 223 (VFALLVPILIPLPVMTLGLFA).

This sequence belongs to the ATPase A chain family. As to quaternary structure, F-type ATPases have 2 components, CF(1) - the catalytic core - and CF(0) - the membrane proton channel. CF(1) has five subunits: alpha(3), beta(3), gamma(1), delta(1), epsilon(1). CF(0) has four main subunits: a, b, b' and c.

The protein localises to the plastid. It localises to the chloroplast thylakoid membrane. In terms of biological role, key component of the proton channel; it plays a direct role in the translocation of protons across the membrane. The chain is ATP synthase subunit a, chloroplastic from Guillardia theta (Cryptophyte).